Reading from the N-terminus, the 390-residue chain is Succinyl-diaminopimelate desuccinylase (390 aa).

Position 75 (histidine 75) interacts with Zn(2+). The active site involves aspartate 77. Aspartate 108 lines the Zn(2+) pocket. Glutamate 141 (proton acceptor) is an active-site residue. Positions 142, 170, and 359 each coordinate Zn(2+).

This sequence belongs to the peptidase M20A family. DapE subfamily. In terms of assembly, homodimer. It depends on Zn(2+) as a cofactor. Co(2+) is required as a cofactor.

It catalyses the reaction N-succinyl-(2S,6S)-2,6-diaminopimelate + H2O = (2S,6S)-2,6-diaminopimelate + succinate. Its pathway is amino-acid biosynthesis; L-lysine biosynthesis via DAP pathway; LL-2,6-diaminopimelate from (S)-tetrahydrodipicolinate (succinylase route): step 3/3. Functionally, catalyzes the hydrolysis of N-succinyl-L,L-diaminopimelic acid (SDAP), forming succinate and LL-2,6-diaminopimelate (DAP), an intermediate involved in the bacterial biosynthesis of lysine and meso-diaminopimelic acid, an essential component of bacterial cell walls. This is Succinyl-diaminopimelate desuccinylase from Maricaulis maris (strain MCS10) (Caulobacter maris).